The chain runs to 254 residues: Probable septum site-determining protein MinC (254 aa).

Belongs to the MinC family. Interacts with MinD and FtsZ.

Its function is as follows. Cell division inhibitor that blocks the formation of polar Z ring septums. Rapidly oscillates between the poles of the cell to destabilize FtsZ filaments that have formed before they mature into polar Z rings. Prevents FtsZ polymerization. This is Probable septum site-determining protein MinC from Burkholderia ambifaria (strain ATCC BAA-244 / DSM 16087 / CCUG 44356 / LMG 19182 / AMMD) (Burkholderia cepacia (strain AMMD)).